The following is a 71-amino-acid chain: MKKIILALVLMLFSFCTLGQETASMHLDDTLSAPIAAEINRKACDTQTPSPSEENDDWCCEVCCNPACAGC.

The first 19 residues, 1–19, serve as a signal peptide directing secretion; that stretch reads MKKIILALVLMLFSFCTLG. Positions 20-52 are excised as a propeptide; it reads QETASMHLDDTLSAPIAAEINRKACDTQTPSPS. Intrachain disulfides connect C59/C64, C60/C68, and C63/C71.

It belongs to the heat-stable enterotoxin family.

The protein localises to the secreted. In terms of biological role, toxin which activates the particulate form of guanylate cyclase and increases cyclic GMP levels within the host intestinal epithelial cells. Could play an important role in pathogenesis. This is Heat-stable enterotoxin B (ystB) from Yersinia enterocolitica.